We begin with the raw amino-acid sequence, 365 residues long: tRNA/tmRNA (uracil-C(5))-methyltransferase (365 aa).

S-adenosyl-L-methionine is bound by residues Q189, Y217, N222, E238, and D298. Residue C323 is the Nucleophile of the active site. Catalysis depends on E357, which acts as the Proton acceptor.

Belongs to the class I-like SAM-binding methyltransferase superfamily. RNA M5U methyltransferase family. TrmA subfamily.

The catalysed reaction is uridine(54) in tRNA + S-adenosyl-L-methionine = 5-methyluridine(54) in tRNA + S-adenosyl-L-homocysteine + H(+). The enzyme catalyses uridine(341) in tmRNA + S-adenosyl-L-methionine = 5-methyluridine(341) in tmRNA + S-adenosyl-L-homocysteine + H(+). Functionally, dual-specificity methyltransferase that catalyzes the formation of 5-methyluridine at position 54 (m5U54) in all tRNAs, and that of position 341 (m5U341) in tmRNA (transfer-mRNA). The protein is tRNA/tmRNA (uracil-C(5))-methyltransferase of Shewanella baltica (strain OS155 / ATCC BAA-1091).